The sequence spans 173 residues: Shikimate kinase 2 (173 aa).

Residue 12-17 (GCGKTT) participates in ATP binding. Mg(2+)-binding residues include Thr16 and Asp32. 3 residues coordinate substrate: Asp34, Arg58, and Gly79. The interval 112–126 (QASPQAHQRPTLTGR) is LID domain. Arg120 lines the ATP pocket. Arg139 contributes to the substrate binding site. ATP is bound at residue Gln155.

Monomer. It depends on Mg(2+) as a cofactor.

The protein resides in the cytoplasm. It catalyses the reaction shikimate + ATP = 3-phosphoshikimate + ADP + H(+). Its pathway is metabolic intermediate biosynthesis; chorismate biosynthesis; chorismate from D-erythrose 4-phosphate and phosphoenolpyruvate: step 5/7. With respect to regulation, inhibited by chloride and sulfate ions. Functionally, catalyzes the specific phosphorylation of the 3-hydroxyl group of shikimic acid using ATP as a cosubstrate. The chain is Shikimate kinase 2 (aroL) from Dickeya chrysanthemi (Pectobacterium chrysanthemi).